A 353-amino-acid chain; its full sequence is uncharacterized protein (353 aa).

Belongs to the MG067/MG068/MG395 family.

This is an uncharacterized protein from Mycoplasma pneumoniae (strain ATCC 29342 / M129 / Subtype 1) (Mycoplasmoides pneumoniae).